Here is a 414-residue protein sequence, read N- to C-terminus: Probable 1-acylglycerol-3-phosphate O-acyltransferase (414 aa).

The 266-residue stretch at 117-382 folds into the AB hydrolase-1 domain; the sequence is PTLVMVHGYG…GGHFVFIDNP (266 aa). The GXSXG motif lies at 193-197; that stretch reads GHSFG. Residues 375–380 carry the HXXXXD motif motif; the sequence is HFVFID.

This sequence belongs to the peptidase S33 family. ABHD4/ABHD5 subfamily.

The protein resides in the cytoplasm. The catalysed reaction is a 1-acyl-sn-glycero-3-phosphate + an acyl-CoA = a 1,2-diacyl-sn-glycero-3-phosphate + CoA. Functionally, lysophosphatidic acid acyltransferase which functions in phosphatidic acid biosynthesis. May regulate neutral lipid accumulation and participate in the regulation of lipid turnover in vegetative cells. May possess additional triacylglycerol lipase and phospholipase A2 activities in vitro. The protein is Probable 1-acylglycerol-3-phosphate O-acyltransferase of Oryza sativa subsp. japonica (Rice).